A 417-amino-acid polypeptide reads, in one-letter code: Histidine biosynthesis bifunctional protein his7 (417 aa).

The segment at 225 to 299 is phosphoribosyl-AMP cyclohydrolase; that stretch reads GLVYSSKESV…HLDTLHCFGQ (75 aa). Positions 303–387 are phosphoribosyl-ATP pyrophosphohydrolase; that stretch reads LCQLEKTLID…ISRHLDLKHR (85 aa).

It localises to the cytoplasm. It carries out the reaction 1-(5-phospho-beta-D-ribosyl)-5'-AMP + H2O = 1-(5-phospho-beta-D-ribosyl)-5-[(5-phospho-beta-D-ribosylamino)methylideneamino]imidazole-4-carboxamide. The enzyme catalyses 1-(5-phospho-beta-D-ribosyl)-ATP + H2O = 1-(5-phospho-beta-D-ribosyl)-5'-AMP + diphosphate + H(+). It participates in amino-acid biosynthesis; L-histidine biosynthesis; L-histidine from 5-phospho-alpha-D-ribose 1-diphosphate: step 2/9. It functions in the pathway amino-acid biosynthesis; L-histidine biosynthesis; L-histidine from 5-phospho-alpha-D-ribose 1-diphosphate: step 3/9. In Schizosaccharomyces pombe (strain 972 / ATCC 24843) (Fission yeast), this protein is Histidine biosynthesis bifunctional protein his7.